We begin with the raw amino-acid sequence, 183 residues long: Lipid droplet coating protein mpl1 (183 aa).

Belongs to the perilipin family.

It is found in the lipid droplet. Its function is as follows. Lipid droplet coating protein that regulates lipid metabolism, appressorial turgor pressure, and virulence. Appressorial turgor pressure is important for breaching the insect cuticle during infection. This Metarhizium robertsii (strain ARSEF 23 / ATCC MYA-3075) (Metarhizium anisopliae (strain ARSEF 23)) protein is Lipid droplet coating protein mpl1.